The sequence spans 68 residues: Antimicrobial peptide UyCT3 (68 aa).

The N-terminal stretch at 1 to 23 is a signal peptide; the sequence is MKNQFVLLLLAIVFLQMIFQSDA. The residue at position 36 (Phe36) is a Phenylalanine amide. Residues 40–68 constitute a propeptide that is removed on maturation; the sequence is GLENMDKFDELFDGDLSEADLDFLKELMR.

This sequence belongs to the non-disulfide-bridged peptide (NDBP) superfamily. Short antimicrobial peptide (group 4) family. Post-translationally, the non-amidated UyCT3 does not show antimicrobial activity. In terms of tissue distribution, expressed by the venom gland.

The protein resides in the secreted. It localises to the target cell membrane. Antimicrobial peptide that inhibits the growth of Gram-positive (S.aureus, MIC=10 uM) and Gram-negative bacteria (E.coli, MIC=15 uM and P.aeruginosa, MIC=6 uM). It also shows 35% of hemolysis when 15 uM are tested (95% at 50 uM). The protein is Antimicrobial peptide UyCT3 of Urodacus yaschenkoi (Inland robust scorpion).